The chain runs to 184 residues: ESX-1 secretion-associated protein EspD (184 aa).

Positions 33–56 (IGVGSAATPDTGPDLDNAHGQAET) are disordered.

It localises to the secreted. Required for ESX-1 function. Required for the maintenance of adequate cellular levels of both EspA and EspC. Facilitates EsxA secretion. In Mycobacterium tuberculosis (strain CDC 1551 / Oshkosh), this protein is ESX-1 secretion-associated protein EspD.